The chain runs to 91 residues: MAFVRSLLGAKKILSRSTTAASAAPKGFLAVYVGESQKKRYLVPISYLNQPSFQALLSKSEEEFGFDHPMGGLTIPCPEDTFINVTSRFQR.

It belongs to the ARG7 family.

The protein localises to the cell membrane. Its function is as follows. Functions as a positive effector of cell expansion through modulation of auxin transport. This is Auxin-responsive protein SAUR20 from Arabidopsis thaliana (Mouse-ear cress).